The chain runs to 531 residues: Basal body-orientation factor 1 (531 aa).

A compositionally biased stretch (basic residues) spans methionine 1–alanine 19. The segment at methionine 1 to valine 32 is disordered. Basic and acidic residues predominate over residues glycine 20–valine 32. 2 coiled-coil regions span residues leucine 26 to alanine 213 and valine 274 to phenylalanine 365. The tract at residues glutamine 465 to isoleucine 505 is disordered. Over residues serine 482 to glutamate 499 the composition is skewed to basic and acidic residues.

This sequence belongs to the BBOF1 family. In terms of tissue distribution, multiciliated cells.

It is found in the cytoplasm. The protein resides in the cytoskeleton. The protein localises to the cilium basal body. Functionally, basal body protein required in multiciliate cells to align and maintain cilia orientation in response to flow. May act by mediating a maturation step that stabilizes and aligns cilia orientation. Not required to respond to planar cell polarity (PCP) or flow-based orientation cues. The chain is Basal body-orientation factor 1 (ccdc176) from Xenopus laevis (African clawed frog).